Here is a 253-residue protein sequence, read N- to C-terminus: Mediator of RNA polymerase II transcription subunit 19 (253 aa).

Disordered stretches follow at residues 18 to 49 and 157 to 253; these read EQYS…TLKT and GPLP…TQVF. The segment covering 21 to 40 has biased composition (low complexity); sequence SPKSSPRAGGAGGRSPVVAR. 2 stretches are compositionally biased toward basic residues: residues 165-183 and 220-233; these read HLKS…KHKY and RKKR…KKQR.

The protein belongs to the Mediator complex subunit 19 family. As to quaternary structure, component of the Mediator complex.

The protein resides in the nucleus. Its function is as follows. Component of the Mediator complex, a coactivator involved in the regulated transcription of nearly all RNA polymerase II-dependent genes. Mediator functions as a bridge to convey information from gene-specific regulatory proteins to the basal RNA polymerase II transcription machinery. Mediator is recruited to promoters by direct interactions with regulatory proteins and serves as a scaffold for the assembly of a functional preinitiation complex with RNA polymerase II and the general transcription factors. This Aedes aegypti (Yellowfever mosquito) protein is Mediator of RNA polymerase II transcription subunit 19 (MED19).